Here is a 449-residue protein sequence, read N- to C-terminus: Serum response factor homolog (449 aa).

Residues L23–G166 form a disordered region. Residues Q69–S80 are compositionally biased toward polar residues. Low complexity predominate over residues Q81 to Q107. The residue at position 156 (S156) is a Phosphoserine. Positions R167–K225 constitute an MADS-box domain. 2 disordered regions span residues Y270–S360 and L418–D449. Low complexity-rich tracts occupy residues S317–S331 and T345–A354.

As to expression, after germ band retraction, high levels of zygotic expression are observed in a distinct subset of peripheral tracheal cells distributed throughout the embryo and low levels in somatic muscle. Expressed in the future intervein tissue of the wing imaginal disk from the third instar larvae until eclosion of the adult fly (at protein level).

The protein localises to the nucleus. In terms of biological role, required for the formation of intervein tissue of the wing. Acts in a dosage-dependent manner to suppress wing vein formation and promote development of intervein cells. Might play a role in the proper formation and maintenance of the trachea. This Drosophila melanogaster (Fruit fly) protein is Serum response factor homolog (bs).